The primary structure comprises 399 residues: MTIEFNPSKRATLGVEWELQLVDRDSGHLRQDAQKLLEELPELSGAESNPPLRHELMQSTIEVVTGICETVDEVKEDLSATVARLTQAADGRGIELACAGTHPIDDWRDQEFAPSQRYSELIEQMQWLARRILTFGVHVHVGVTDRDKVIPIVNALSRYLPHFLALTASSPFWSGHDTGLASSRSIVFGALPTAGPPPRLAHWGAFEEYMDTLLRAGTITSIKEVWWDIRPHPEFGTVEIRMFDGIPTVREVGMAAALSQSLVQLFEQQLDRGYRLPSPSSWVVTDNKWRATRYGLDARIIIDERGSTVPLRDDLYELLHELRPIAERLGCAEDLDVVAEILHYGASYERQRAIIRQGGVLKDVVDALVKEFRAGAPAVGSSHGRTDPSRNGGPSHAGA.

The segment at P377–A399 is disordered.

It belongs to the glutamate--cysteine ligase type 2 family. YbdK subfamily.

The catalysed reaction is L-cysteine + L-glutamate + ATP = gamma-L-glutamyl-L-cysteine + ADP + phosphate + H(+). In terms of biological role, ATP-dependent carboxylate-amine ligase which exhibits weak glutamate--cysteine ligase activity. In Thermobifida fusca (strain YX), this protein is Putative glutamate--cysteine ligase 2.